Reading from the N-terminus, the 215-residue chain is Putative zinc finger protein ORF121 (215 aa).

The segment at 53-105 adopts an RING-type; degenerate zinc-finger fold; that stretch reads CVICMEPTYTKKTLAECDIEGGALRVTTMPCPTHYICDNCIRQEMEDKCPICR.

This Magallana gigas (Pacific oyster) protein is Putative zinc finger protein ORF121.